Consider the following 330-residue polypeptide: MENVNRIVAEGIAAVEAAQDFNALEQIKARYLGKTGELTGLLKTLGQMSPEERKTIGAHINECKNRFQTAFNAKRDALNEAKLQARLAAEALDITLPGRAQEGGSLHPVTLTLQRVVELFHGMGFEVADGPEIEDDFHNFQALNIPANHPARAMQDTFYVENGDVLRTHTSPIQIRYMLDKKEPPVRIIAPGRVYRVDSDATHSPMFHQAEGLWVEEGVTFADLKAVFTDFIRRFFERDDLQVRFRPSFFPFTEPSAEIDIMGENGKWLEVGGCGMVHPNVLKNVNIDPEKYTGFAFGIGLDRFAMLRYNVNDLRLFFDNDLNFLKQFVK.

Glutamate 254 lines the Mg(2+) pocket.

The protein belongs to the class-II aminoacyl-tRNA synthetase family. Phe-tRNA synthetase alpha subunit type 1 subfamily. Tetramer of two alpha and two beta subunits. Mg(2+) is required as a cofactor.

It is found in the cytoplasm. It carries out the reaction tRNA(Phe) + L-phenylalanine + ATP = L-phenylalanyl-tRNA(Phe) + AMP + diphosphate + H(+). This Neisseria meningitidis serogroup A / serotype 4A (strain DSM 15465 / Z2491) protein is Phenylalanine--tRNA ligase alpha subunit (pheS).